The following is a 503-amino-acid chain: Protein DETOXIFICATION 36 (503 aa).

12 consecutive transmembrane segments (helical) span residues 54-74, 87-107, 137-157, 166-186, 203-223, 225-245, 271-293, 313-333, 355-375, 399-419, 427-447, and 456-476; these read LFHL…MSML, LAAA…LMLG, IVLV…KPLL, VASV…AYAV, SAYI…LSVF, FGWG…IIVL, GLWD…SWYS, LAIC…FNAA, AVTT…ILSW, FLAI…VAVG, AYVN…VLGF, and IWTG…IVTF.

Belongs to the multi antimicrobial extrusion (MATE) (TC 2.A.66.1) family.

It localises to the membrane. The chain is Protein DETOXIFICATION 36 from Arabidopsis thaliana (Mouse-ear cress).